The chain runs to 77 residues: Translation initiation factor IF-1, chloroplastic (77 aa).

An S1-like domain is found at 1–71 (MKEQKWTHEG…TRGRIIYRLR (71 aa)).

It belongs to the IF-1 family. As to quaternary structure, component of the 30S ribosomal translation pre-initiation complex which assembles on the 30S ribosome in the order IF-2 and IF-3, IF-1 and N-formylmethionyl-tRNA(fMet); mRNA recruitment can occur at any time during PIC assembly.

The protein localises to the plastid. The protein resides in the chloroplast. Its function is as follows. One of the essential components for the initiation of protein synthesis. Stabilizes the binding of IF-2 and IF-3 on the 30S subunit to which N-formylmethionyl-tRNA(fMet) subsequently binds. Helps modulate mRNA selection, yielding the 30S pre-initiation complex (PIC). Upon addition of the 50S ribosomal subunit IF-1, IF-2 and IF-3 are released leaving the mature 70S translation initiation complex. This Coffea arabica (Arabian coffee) protein is Translation initiation factor IF-1, chloroplastic.